Consider the following 136-residue polypeptide: Large ribosomal subunit protein uL16 (136 aa).

Belongs to the universal ribosomal protein uL16 family. As to quaternary structure, part of the 50S ribosomal subunit.

Its function is as follows. Binds 23S rRNA and is also seen to make contacts with the A and possibly P site tRNAs. This is Large ribosomal subunit protein uL16 from Ruthia magnifica subsp. Calyptogena magnifica.